We begin with the raw amino-acid sequence, 242 residues long: Segregation and condensation protein A (242 aa).

Belongs to the ScpA family. Component of a cohesin-like complex composed of ScpA, ScpB and the Smc homodimer, in which ScpA and ScpB bind to the head domain of Smc. The presence of the three proteins is required for the association of the complex with DNA.

The protein resides in the cytoplasm. Functionally, participates in chromosomal partition during cell division. May act via the formation of a condensin-like complex containing Smc and ScpB that pull DNA away from mid-cell into both cell halves. The polypeptide is Segregation and condensation protein A (Streptococcus pneumoniae serotype 19F (strain G54)).